A 70-amino-acid polypeptide reads, in one-letter code: Mu-conotoxin-like Am3.4 (70 aa).

The signal sequence occupies residues 1 to 20 (MMYKLGVLLIICLLLFPLTA). Residues 21–53 (VPQDGDQPADRPAERMQDDISFEHDRFFDPVKR) constitute a propeptide that is removed on maturation. 3 disulfide bridges follow: Cys54/Cys69, Cys55/Cys65, and Cys61/Cys68. 4-hydroxyproline; partial; in major form is present on Pro67. Cys69 is subject to Cysteine amide.

It belongs to the conotoxin M superfamily. Contains 3 disulfide bonds. Expressed by the venom duct.

Its subcellular location is the secreted. Mu-conotoxins block voltage-gated sodium channels (Nav). In Conus amadis (Amadis cone), this protein is Mu-conotoxin-like Am3.4.